The sequence spans 1826 residues: ATPase family AAA domain-containing protein 5 (1826 aa).

S44 carries the post-translational modification Phosphoserine. A Glycyl lysine isopeptide (Lys-Gly) (interchain with G-Cter in SUMO2) cross-link involves residue K127. Disordered regions lie at residues 170–254 (SIED…KRAD), 282–311 (PAVP…CEPS), 323–367 (AQVH…RKSN), 398–572 (QQFM…EPGS), 588–623 (RSCS…ARTS), 647–684 (KFTR…TSKN), and 709–729 (VVPL…KSPE). At S215 the chain carries Phosphoserine. A compositionally biased stretch (basic and acidic residues) spans 243–254 (NDSRTHATKRAD). The span at 298–311 (SGSEGELSGSCEPS) shows a compositional bias: low complexity. Residues S351 and S366 each carry the phosphoserine modification. Residues 365 to 381 (KSNVVIQEGQLELAVLE) form an interaction with WDR48 region. The span at 418-442 (KPLEKQKDPSEKSVHEGDSSSEKII) shows a compositional bias: basic and acidic residues. The segment covering 445-456 (PNIQRVSSQGCL) has biased composition (polar residues). The segment covering 459 to 468 (HADRGSFPKE) has biased composition (basic and acidic residues). Basic residues predominate over residues 469–481 (KSKKPNKKGKKTR). Over residues 487 to 505 (NREENIQKEKTAFSLKDEQ) the composition is skewed to basic and acidic residues. The span at 540–559 (DSVQMSLCNRNKSRSSSTPT) shows a compositional bias: polar residues. Phosphoserine occurs at positions 591 and 603. Residues S727 and S801 each carry the phosphoserine modification. Positions 965-1034 (GKQASPQLQP…NLDPSRDSGT (70 aa)) are disordered. The span at 1006 to 1019 (EEMKGRSKDLDERI) shows a compositional bias: basic and acidic residues. At S1104 the chain carries Phosphoserine. 1119 to 1126 (GPTGVGKT) contacts ATP. The disordered stretch occupies residues 1183–1216 (YNIGKSPKKLNSPGKVVTSPRKLPPSSPKTSGQK). An LXCXE motif motif is present at residues 1415–1419 (LVCSE). Disordered stretches follow at residues 1527–1552 (PASM…RKQK) and 1592–1611 (SNPE…VPQP). The interaction with RAD51 and RFC5 stretch occupies residues 1612–1701 (PKTLAEKKCC…ATAEALSFTE (90 aa)).

The protein belongs to the AAA ATPase family. As to quaternary structure, component of a heteropentameric replication factor ATAD5 RFC-like complex composed of one large subunit (ATAD5) and four small subunits (RFC2, RFC3, RFC4 and RFC5). Within the ATAD5 RFC-like complex, interacts with RFC2, RFC4 and RFC5. Within the ATAD5 RFC-like complex, interacts directly via-N terminal with RAD51; the interactions is enhanced under replication stress. Interacts with RB1 predominantly in G1 phase via its LXCXE motif. Interacts with RAD9A in growing cells. The interaction with RAD9A is reduced after exposure to DNA replication-inhibiting agents. Interacts with BRD4. Interacts with PCNA. Interacts with deubiquitinating enzyme USP1, and its associated factor, WDR48. ATR may stimulate the RAD9A dissociation. In terms of tissue distribution, expressed ubiquitously in all cell lines like teratocarcinoma, cell lymphoma, lymphoma.

Its subcellular location is the nucleus. Its function is as follows. Has an important role in DNA replication and in maintaining genome integrity during replication stress. Involved in a RAD9A-related damage checkpoint, a pathway that is important in determining whether DNA damage is compatible with cell survival or whether it requires cell elimination by apoptosis. Modulates the RAD9A interaction with BCL2 and thereby induces DNA damage-induced apoptosis. Promotes PCNA deubiquitination by recruiting the ubiquitin-specific protease 1 (USP1) and WDR48 thereby down-regulating the error-prone damage bypass pathway. As component of the ATAD5 RFC-like complex, regulates the function of the DNA polymerase processivity factor PCNA by unloading the ring-shaped PCNA homotrimer from DNA after replication during the S phase of the cell cycle. This seems to be dependent on its ATPase activity. Plays important roles in restarting stalled replication forks under replication stress, by unloading the PCNA homotrimer from DNA and recruiting RAD51 possibly through an ATR-dependent manner. Ultimately this enables replication fork regression, breakage, and eventual fork restart. Both the PCNA unloading activity and the interaction with WDR48 are required to efficiently recruit RAD51 to stalled replication forks. Promotes the generation of MUS81-mediated single-stranded DNA-associated breaks in response to replication stress, which is an alternative pathway to restart stalled/regressed replication forks. The chain is ATPase family AAA domain-containing protein 5 (Atad5) from Mus musculus (Mouse).